The chain runs to 400 residues: Enoyl-[acyl-carrier-protein] reductase [NADH] (400 aa).

NAD(+) is bound by residues 48-53, 74-75, 111-112, and 139-140; these read GSSSGY, FE, DA, and LA. Residue Y225 coordinates substrate. Catalysis depends on Y235, which acts as the Proton donor. NAD(+) is bound by residues K244 and 273-275; that span reads VVT.

It belongs to the TER reductase family. Monomer.

It catalyses the reaction a 2,3-saturated acyl-[ACP] + NAD(+) = a (2E)-enoyl-[ACP] + NADH + H(+). It participates in lipid metabolism; fatty acid biosynthesis. In terms of biological role, involved in the final reduction of the elongation cycle of fatty acid synthesis (FAS II). Catalyzes the reduction of a carbon-carbon double bond in an enoyl moiety that is covalently linked to an acyl carrier protein (ACP). The sequence is that of Enoyl-[acyl-carrier-protein] reductase [NADH] from Aliivibrio salmonicida (strain LFI1238) (Vibrio salmonicida (strain LFI1238)).